A 410-amino-acid chain; its full sequence is Cytochrome P450 CYP107DY1 (410 aa).

Heme-binding residues include H106 and R110. T249 and E253 together coordinate substrate. The heme site is built by R302, H358, and C360.

The protein belongs to the cytochrome P450 family. Heme serves as cofactor.

It catalyses the reaction mevastatin + 2 reduced [2Fe-2S]-[ferredoxin] + O2 + 2 H(+) = pravastatin lactone + 2 oxidized [2Fe-2S]-[ferredoxin] + H2O. Cytochrome P450 whose physiological substrate is unknown. In vitro, is able to catalyze the selective hydroxylation of mevastatin to pravastatin, the widely used therapeutic agent for hypercholesterolemia. This Priestia megaterium (strain ATCC 12872 / QMB1551) (Bacillus megaterium) protein is Cytochrome P450 CYP107DY1.